The sequence spans 299 residues: Formin-like protein 12 (299 aa).

The region spanning 1 to 295 is the FH2 domain; that stretch reads MASNCEKMLS…LEKRKMNIKQ (295 aa).

It belongs to the formin-like family. Class-II subfamily.

This is Formin-like protein 12 (FH12) from Arabidopsis thaliana (Mouse-ear cress).